A 263-amino-acid chain; its full sequence is Endonuclease 8 (263 aa).

Pro-2 acts as the Schiff-base intermediate with DNA in catalysis. Glu-3 functions as the Proton donor in the catalytic mechanism. The active-site Proton donor; for beta-elimination activity is Lys-53. Positions 70, 125, and 169 each coordinate DNA. Residues 229-263 form an FPG-type zinc finger; that stretch reads KVFHRDGELCERCGGIIEKTTLSSRPFYWCPGCQH. Catalysis depends on Arg-253, which acts as the Proton donor; for delta-elimination activity.

It belongs to the FPG family. The cofactor is Zn(2+).

It catalyses the reaction 2'-deoxyribonucleotide-(2'-deoxyribose 5'-phosphate)-2'-deoxyribonucleotide-DNA = a 3'-end 2'-deoxyribonucleotide-(2,3-dehydro-2,3-deoxyribose 5'-phosphate)-DNA + a 5'-end 5'-phospho-2'-deoxyribonucleoside-DNA + H(+). Functionally, involved in base excision repair of DNA damaged by oxidation or by mutagenic agents. Acts as a DNA glycosylase that recognizes and removes damaged bases. Has a preference for oxidized pyrimidines, such as thymine glycol, 5,6-dihydrouracil and 5,6-dihydrothymine. Has AP (apurinic/apyrimidinic) lyase activity and introduces nicks in the DNA strand. Cleaves the DNA backbone by beta-delta elimination to generate a single-strand break at the site of the removed base with both 3'- and 5'-phosphates. This is Endonuclease 8 from Escherichia coli O7:K1 (strain IAI39 / ExPEC).